We begin with the raw amino-acid sequence, 124 residues long: Small ribosomal subunit protein bS6 (124 aa).

This sequence belongs to the bacterial ribosomal protein bS6 family.

In terms of biological role, binds together with bS18 to 16S ribosomal RNA. The sequence is that of Small ribosomal subunit protein bS6 from Campylobacter lari (strain RM2100 / D67 / ATCC BAA-1060).